The chain runs to 255 residues: Hydroxyacylglutathione hydrolase (255 aa).

Zn(2+) is bound by residues H56, H58, D60, H61, H114, D133, and H171.

The protein belongs to the metallo-beta-lactamase superfamily. Glyoxalase II family. As to quaternary structure, monomer. Requires Zn(2+) as cofactor.

It catalyses the reaction an S-(2-hydroxyacyl)glutathione + H2O = a 2-hydroxy carboxylate + glutathione + H(+). Its pathway is secondary metabolite metabolism; methylglyoxal degradation; (R)-lactate from methylglyoxal: step 2/2. Thiolesterase that catalyzes the hydrolysis of S-D-lactoyl-glutathione to form glutathione and D-lactic acid. This Ruegeria pomeroyi (strain ATCC 700808 / DSM 15171 / DSS-3) (Silicibacter pomeroyi) protein is Hydroxyacylglutathione hydrolase.